Consider the following 165-residue polypeptide: MKRVLFSVIVFTAVGFTFCQSKAHALTFTVLPITQKTDQWSVKVSEAKNVKEFTRPHKGEYQVYSLEVKNIGEKAATVDVQLYRNDPNSITRFSLFGCPDENCVKPKEDSKMLAESLNDGSPLKFNHFMLADKASELEVVIIWTQKGQEGRNLKQTFKFTEDGVN.

A signal peptide spans 1–25; it reads MKRVLFSVIVFTAVGFTFCQSKAHA.

This is an uncharacterized protein from Bacillus subtilis (strain 168).